We begin with the raw amino-acid sequence, 2344 residues long: Genome polyprotein (2344 aa).

The 162-residue stretch at 492-653 folds into the SF3 helicase domain; sequence QKVISDLHTM…ESWQATRHGS (162 aa). ATP is bound at residue 522–529; it reads GAPGIGKT. Tyr1014 carries the post-translational modification O-(5'-phospho-RNA)-tyrosine. Tyr1014 carries the post-translational modification O-UMP-tyrosine; transient. One can recognise a Peptidase C24 domain in the interval 1109–1244; that stretch reads GLPGFMRHNG…SKMCTLIDLT (136 aa). Active-site for 3CLpro activity residues include His1135, Asp1152, and Cys1212. The RdRp catalytic domain occupies 1495-1619; the sequence is SDFLCLDYSK…AMTPMMVSLL (125 aa). Cys1584 and Cys1591 are oxidised to a cystine. Positions 1771 to 1796 are disordered; sequence RTAPQGEAAGTATTASVPGTTTDGMD. Residues 1778–1794 are compositionally biased toward low complexity; the sequence is AAGTATTASVPGTTTDG.

In terms of assembly, homodimer. Homomultimer. Interacts with host type II histo-blood group structures antigens at the surface of target cells. The cofactor is Mn(2+). Specific enzymatic cleavages by its own cysteine protease yield mature proteins. The protease cleaves itself from the nascent polyprotein autocatalytically. Precursor p41 can be cleaved by viral 3CLpro into protein p19 and VPg, or cleaved by host protease into protein p23/2 and protein p18. In terms of processing, VPg is uridylylated by the polymerase and is covalently attached to the 5'-end of the polyadenylated genomic and subgenomic RNAs. This uridylylated form acts as a nucleotide-peptide primer for the polymerase.

The protein resides in the host cytoplasm. It localises to the host endoplasmic reticulum. It is found in the virion. The enzyme catalyses a ribonucleoside 5'-triphosphate + H2O = a ribonucleoside 5'-diphosphate + phosphate + H(+). It carries out the reaction Endopeptidase with a preference for cleavage when the P1 position is occupied by Glu-|-Xaa and the P1' position is occupied by Gly-|-Yaa.. The catalysed reaction is RNA(n) + a ribonucleoside 5'-triphosphate = RNA(n+1) + diphosphate. Together with NTPase and NS4, initiates the formation of the replication complex. Induces the proliferation of the host smooth ER membranes forming long tubular structures. These remodeled membranes probably form the viral factories that contain the replication complex. Functionally, displays NTPase activity, but no helicase activity. Induces the formation of convoluted membranes derived from the host ER. These remodeled membranes probably form the viral factories that contain the replication complex. Together with NS2 and NS4, initiates the formation of the replication complex. In terms of biological role, probable key protein responsible for the formation of membrane alterations by the virus. Induces the formation of convoluted membranes derived from the host ER. These remodeled membranes probably form the viral factories that contain the replication complex. Together with NS2 and NTPase, initiates the formation of the replication complex. Its function is as follows. Viral genome-linked protein is covalently linked to the 5'-end of the positive-strand, negative-strand genomic RNAs and subgenomic RNA. Acts as a genome-linked replication primer. May recruit ribosome to viral RNA thereby promoting viral proteins translation. Interacts with host translation initiation complex to allow the translation of viral proteins. Processes the polyprotein. 3CLpro-RdRp is first released by autocleavage, then all other proteins are cleaved. May cleave polyadenylate-binding protein thereby inhibiting cellular translation. Functionally, replicates genomic and antigenomic RNA by recognizing replications specific signals. Also transcribes a subgenomic mRNA by initiating RNA synthesis internally on antigenomic RNA. This sgRNA codes for structural proteins. Catalyzes the covalent attachment VPg with viral RNAs. In terms of biological role, capsid protein VP60 self assembles to form an icosahedral capsid with a T=3 symmetry, about 35 nm in diameter, and consisting of 180 capsid proteins. A smaller form of capsid with a diameter of 23 nm might be capsid proteins assembled as icosahedron with T=1 symmetry. The capsid encapsulate VP2 proteins and genomic or subgenomic RNA. Attaches virion to target cells by binding histo-blood group antigens, inducing endocytosis of the viral particle. Acidification of the endosome induces conformational change of capsid protein thereby injecting virus genomic RNA into host cytoplasm. This chain is Genome polyprotein, found in Oryctolagus cuniculus (Rabbit).